The chain runs to 132 residues: Dormancy-associated protein 1 (132 aa).

Residues 53–76 (MPAAVSPGTPTTPTTPTTPRKDNV) form a disordered region. Over residues 61–70 (TPTTPTTPTT) the composition is skewed to low complexity. Position 64 is a phosphothreonine (threonine 64).

This sequence belongs to the DRM1/ARP family. As to expression, isoform 1: Expressed mainly in the low bolt. Isoform 2: Expressed mainly in the low bolt. Detected in flowers. Isoform 4: Expressed mainly in the low bolt. Isoform 5: Expressed mainly in the 6 days old seedlings. Detected in 16 days old seedlings, axil, low bolt and floral samples, but only barely in leaves and top bolt.

This Arabidopsis thaliana (Mouse-ear cress) protein is Dormancy-associated protein 1.